The chain runs to 227 residues: 2-C-methyl-D-erythritol 4-phosphate cytidylyltransferase (227 aa).

It belongs to the IspD/TarI cytidylyltransferase family. IspD subfamily.

The catalysed reaction is 2-C-methyl-D-erythritol 4-phosphate + CTP + H(+) = 4-CDP-2-C-methyl-D-erythritol + diphosphate. It participates in isoprenoid biosynthesis; isopentenyl diphosphate biosynthesis via DXP pathway; isopentenyl diphosphate from 1-deoxy-D-xylulose 5-phosphate: step 2/6. Functionally, catalyzes the formation of 4-diphosphocytidyl-2-C-methyl-D-erythritol from CTP and 2-C-methyl-D-erythritol 4-phosphate (MEP). This chain is 2-C-methyl-D-erythritol 4-phosphate cytidylyltransferase, found in Bordetella parapertussis (strain 12822 / ATCC BAA-587 / NCTC 13253).